The sequence spans 448 residues: Acetate kinase (448 aa).

Asn7 serves as a coordination point for Mg(2+). Lys14 contributes to the ATP binding site. Arg91 contributes to the substrate binding site. Asp148 functions as the Proton donor/acceptor in the catalytic mechanism. Residues 208 to 212 (HIGNG) and 283 to 285 (DRR) contribute to the ATP site. Glu388 contributes to the Mg(2+) binding site.

Belongs to the acetokinase family. In terms of assembly, homodimer. It depends on Mg(2+) as a cofactor. Mn(2+) is required as a cofactor.

It localises to the cytoplasm. The enzyme catalyses acetate + ATP = acetyl phosphate + ADP. It functions in the pathway metabolic intermediate biosynthesis; acetyl-CoA biosynthesis; acetyl-CoA from acetate: step 1/2. In terms of biological role, catalyzes the formation of acetyl phosphate from acetate and ATP. Can also catalyze the reverse reaction. The polypeptide is Acetate kinase (Treponema pallidum (strain Nichols)).